A 243-amino-acid chain; its full sequence is 2-O-methyltransferase NoeI (243 aa).

It belongs to the FkbM methyltransferase family.

It is found in the cytoplasm. Required for 2-O-methylation of the fucosyl group of Nod factors. The polypeptide is 2-O-methyltransferase NoeI (noeI) (Sinorhizobium fredii (strain NBRC 101917 / NGR234)).